The primary structure comprises 474 residues: Dipeptidase A (474 aa).

The active site involves Cys-6.

It belongs to the peptidase C69 family. In terms of assembly, homooctamer.

It catalyses the reaction an L-aminoacyl-L-amino acid + H2O = 2 an L-alpha-amino acid. Its activity is regulated as follows. Inhibited by Zn(2+), Cu(2+), Ca(2+) and Cd(2+). Functionally, hydrolyzes a wide range of dipeptides but unable to hydrolyze dipeptides containing proline. Highest activity against Met-Ala. In Lactobacillus helveticus (Lactobacillus suntoryeus), this protein is Dipeptidase A (pepDA).